The following is a 126-amino-acid chain: Histone H2B type 1-N (126 aa).

Low complexity predominate over residues 1–12 (MPEPSKSAPAPK). Residues 1–36 (MPEPSKSAPAPKKGSKKAVTKAQKKDGKKRKRSRKE) form a disordered region. Proline 2 bears the N-acetylproline mark. Glutamate 3 is subject to ADP-ribosyl glutamic acid. An N6-(2-hydroxyisobutyryl)lysine; alternate modification is found at lysine 6. N6-(beta-hydroxybutyryl)lysine; alternate is present on lysine 6. N6-acetyllysine; alternate is present on lysine 6. Lysine 6 is subject to N6-butyryllysine; alternate. Residue lysine 6 is modified to N6-crotonyllysine; alternate. Position 6 is an N6-lactoyllysine; alternate (lysine 6). A Glycyl lysine isopeptide (Lys-Gly) (interchain with G-Cter in SUMO2); alternate cross-link involves residue lysine 6. The residue at position 7 (serine 7) is an ADP-ribosylserine. An N6-(beta-hydroxybutyryl)lysine; alternate modification is found at lysine 12. N6-acetyllysine; alternate is present on residues lysine 12 and lysine 13. Lysine 12 and lysine 13 each carry N6-crotonyllysine; alternate. Lysine 12 carries the post-translational modification N6-lactoyllysine; alternate. Residue lysine 13 is modified to N6-(2-hydroxyisobutyryl)lysine; alternate. Position 15 is a phosphoserine; by STK4/MST1 (serine 15). Lysine 16, lysine 17, lysine 21, and lysine 24 each carry N6-acetyllysine; alternate. N6-crotonyllysine; alternate is present on residues lysine 16, lysine 17, lysine 21, and lysine 24. N6-lactoyllysine; alternate is present on residues lysine 16, lysine 17, lysine 21, and lysine 24. The residue at position 17 (lysine 17) is an N6-glutaryllysine; alternate. Residues lysine 21 and lysine 24 each carry the N6-(2-hydroxyisobutyryl)lysine; alternate modification. Residue lysine 21 is modified to N6-(beta-hydroxybutyryl)lysine; alternate. At lysine 21 the chain carries N6-butyryllysine; alternate. A Glycyl lysine isopeptide (Lys-Gly) (interchain with G-Cter in SUMO2); alternate cross-link involves residue lysine 21. Residue lysine 25 is modified to N6-(2-hydroxyisobutyryl)lysine. Residue lysine 35 is modified to N6-(2-hydroxyisobutyryl)lysine; alternate. Lysine 35 carries the post-translational modification N6-(beta-hydroxybutyryl)lysine; alternate. Lysine 35 carries the post-translational modification N6-crotonyllysine; alternate. Position 35 is an N6-glutaryllysine; alternate (lysine 35). An N6-succinyllysine; alternate modification is found at lysine 35. Lysine 35 is covalently cross-linked (Glycyl lysine isopeptide (Lys-Gly) (interchain with G-Cter in ubiquitin); alternate). Position 36 is a polyADP-ribosyl glutamic acid (glutamate 36). Serine 37 bears the Phosphoserine; by AMPK mark. An N6-(2-hydroxyisobutyryl)lysine; alternate mark is found at lysine 44, lysine 47, and lysine 58. Lysine 44 carries the N6-lactoyllysine; alternate modification. Residues lysine 44 and lysine 47 each carry the N6-glutaryllysine; alternate modification. N6-methyllysine; alternate is present on lysine 47. Position 58 is an N6,N6-dimethyllysine; alternate (lysine 58). Position 80 is a dimethylated arginine (arginine 80). Residue lysine 86 is modified to N6-(2-hydroxyisobutyryl)lysine; alternate. Lysine 86 carries the N6-acetyllysine; alternate modification. Lysine 86 bears the N6-lactoyllysine; alternate mark. An N6,N6,N6-trimethyllysine; alternate modification is found at lysine 86. Residues arginine 87 and arginine 93 each carry the omega-N-methylarginine modification. Lysine 109 is modified (N6-(2-hydroxyisobutyryl)lysine; alternate). N6-lactoyllysine; alternate is present on lysine 109. Lysine 109 is modified (N6-glutaryllysine; alternate). Lysine 109 is subject to N6-methyllysine; alternate. O-linked (GlcNAc) serine glycosylation occurs at serine 113. Threonine 116 carries the post-translational modification Phosphothreonine. An N6-(2-hydroxyisobutyryl)lysine; alternate mark is found at lysine 117 and lysine 121. An N6-(beta-hydroxybutyryl)lysine; alternate modification is found at lysine 117. Residues lysine 117 and lysine 121 each carry the N6-lactoyllysine; alternate modification. Residues lysine 117 and lysine 121 each carry the N6-glutaryllysine; alternate modification. Residues lysine 117 and lysine 121 each carry the N6-succinyllysine; alternate modification. N6-methylated lysine; alternate is present on lysine 117. Lysine 121 participates in a covalent cross-link: Glycyl lysine isopeptide (Lys-Gly) (interchain with G-Cter in ubiquitin); alternate.

This sequence belongs to the histone H2B family. As to quaternary structure, the nucleosome is a histone octamer containing two molecules each of H2A, H2B, H3 and H4 assembled in one H3-H4 heterotetramer and two H2A-H2B heterodimers. The octamer wraps approximately 147 bp of DNA. In terms of processing, monoubiquitination at Lys-35 (H2BK34Ub) by the MSL1/MSL2 dimer is required for histone H3 'Lys-4' (H3K4me) and 'Lys-79' (H3K79me) methylation and transcription activation at specific gene loci, such as HOXA9 and MEIS1 loci. Similarly, monoubiquitination at Lys-121 (H2BK120Ub) by the RNF20/40 complex gives a specific tag for epigenetic transcriptional activation and is also prerequisite for histone H3 'Lys-4' and 'Lys-79' methylation. It also functions cooperatively with the FACT dimer to stimulate elongation by RNA polymerase II. H2BK120Ub also acts as a regulator of mRNA splicing: deubiquitination by USP49 is required for efficient cotranscriptional splicing of a large set of exons. Post-translationally, phosphorylated on Ser-15 (H2BS14ph) by STK4/MST1 during apoptosis; which facilitates apoptotic chromatin condensation. Also phosphorylated on Ser-15 in response to DNA double strand breaks (DSBs), and in correlation with somatic hypermutation and immunoglobulin class-switch recombination. Phosphorylation at Ser-37 (H2BS36ph) by AMPK in response to stress promotes transcription. GlcNAcylation at Ser-113 promotes monoubiquitination of Lys-121. It fluctuates in response to extracellular glucose, and associates with transcribed genes. In terms of processing, ADP-ribosylated by PARP1 or PARP2 on Ser-7 (H2BS6ADPr) in response to DNA damage. H2BS6ADPr promotes recruitment of CHD1L. Mono-ADP-ribosylated on Glu-3 (H2BE2ADPr) by PARP3 in response to single-strand breaks. Poly ADP-ribosylation on Glu-36 (H2BE35ADPr) by PARP1 regulates adipogenesis: it inhibits phosphorylation at Ser-37 (H2BS36ph), thereby blocking expression of pro-adipogenetic genes. Post-translationally, crotonylation (Kcr) is specifically present in male germ cells and marks testis-specific genes in post-meiotic cells, including X-linked genes that escape sex chromosome inactivation in haploid cells. Crotonylation marks active promoters and enhancers and confers resistance to transcriptional repressors. It is also associated with post-meiotically activated genes on autosomes. Lactylated in macrophages by EP300/P300 by using lactoyl-CoA directly derived from endogenous or exogenous lactate, leading to stimulates gene transcription.

It is found in the nucleus. Its subcellular location is the chromosome. Functionally, core component of nucleosome. Nucleosomes wrap and compact DNA into chromatin, limiting DNA accessibility to the cellular machineries which require DNA as a template. Histones thereby play a central role in transcription regulation, DNA repair, DNA replication and chromosomal stability. DNA accessibility is regulated via a complex set of post-translational modifications of histones, also called histone code, and nucleosome remodeling. This is Histone H2B type 1-N (H2BC15) from Bos taurus (Bovine).